Consider the following 252-residue polypeptide: Pantothenate synthetase (252 aa).

29–36 (MGNLHAGH) is a binding site for ATP. H36 serves as the catalytic Proton donor. Position 60 (Q60) interacts with (R)-pantoate. Residue Q60 coordinates beta-alanine. Residue 146 to 149 (GEKD) participates in ATP binding. Q152 is a binding site for (R)-pantoate. Residues V175 and 183–186 (CSSR) each bind ATP.

This sequence belongs to the pantothenate synthetase family. In terms of assembly, homodimer.

The protein resides in the cytoplasm. The catalysed reaction is (R)-pantoate + beta-alanine + ATP = (R)-pantothenate + AMP + diphosphate + H(+). It participates in cofactor biosynthesis; (R)-pantothenate biosynthesis; (R)-pantothenate from (R)-pantoate and beta-alanine: step 1/1. Functionally, catalyzes the condensation of pantoate with beta-alanine in an ATP-dependent reaction via a pantoyl-adenylate intermediate. The chain is Pantothenate synthetase from Legionella pneumophila subsp. pneumophila (strain Philadelphia 1 / ATCC 33152 / DSM 7513).